The chain runs to 268 residues: Ribonuclease P protein subunit p30 (268 aa).

Alanine 2 is subject to N-acetylalanine. Serine 251 is subject to Phosphoserine.

The protein belongs to the eukaryotic/archaeal RNase P protein component 3 family. As to quaternary structure, component of nuclear RNase P and RNase MRP ribonucleoproteins. RNase P consists of a catalytic RNA moiety and about 10 protein subunits; POP1, POP4, POP5, POP7, RPP14, RPP21, RPP25, RPP30, RPP38 and RPP40. Within the RNase P complex, POP1, POP7 and RPP25 form the 'finger' subcomplex, POP5, RPP14, RPP40 and homodimeric RPP30 form the 'palm' subcomplex, and RPP21, POP4 and RPP38 form the 'wrist' subcomplex. All subunits of the RNase P complex interact with the catalytic RNA. Several subunits of RNase P are also part of the RNase MRP complex. RNase MRP consists of a catalytic RNA moiety and about 8 protein subunits; POP1, POP7, RPP25, RPP30, RPP38, RPP40 and possibly also POP4 and POP5.

Its subcellular location is the nucleus. The protein localises to the nucleolus. Component of ribonuclease P, a ribonucleoprotein complex that generates mature tRNA molecules by cleaving their 5'-ends. Also a component of the MRP ribonuclease complex, which cleaves pre-rRNA sequences. This Bos taurus (Bovine) protein is Ribonuclease P protein subunit p30 (RPP30).